We begin with the raw amino-acid sequence, 258 residues long: Imidazole glycerol phosphate synthase subunit HisF (258 aa).

Catalysis depends on residues D11 and D130.

Belongs to the HisA/HisF family. In terms of assembly, heterodimer of HisH and HisF.

The protein resides in the cytoplasm. It carries out the reaction 5-[(5-phospho-1-deoxy-D-ribulos-1-ylimino)methylamino]-1-(5-phospho-beta-D-ribosyl)imidazole-4-carboxamide + L-glutamine = D-erythro-1-(imidazol-4-yl)glycerol 3-phosphate + 5-amino-1-(5-phospho-beta-D-ribosyl)imidazole-4-carboxamide + L-glutamate + H(+). It functions in the pathway amino-acid biosynthesis; L-histidine biosynthesis; L-histidine from 5-phospho-alpha-D-ribose 1-diphosphate: step 5/9. IGPS catalyzes the conversion of PRFAR and glutamine to IGP, AICAR and glutamate. The HisF subunit catalyzes the cyclization activity that produces IGP and AICAR from PRFAR using the ammonia provided by the HisH subunit. The protein is Imidazole glycerol phosphate synthase subunit HisF of Sodalis glossinidius (strain morsitans).